Consider the following 851-residue polypeptide: Alanine--tRNA ligase (851 aa).

Zn(2+) contacts are provided by His554, His558, Cys656, and His660.

It belongs to the class-II aminoacyl-tRNA synthetase family. Requires Zn(2+) as cofactor.

The protein resides in the cytoplasm. The enzyme catalyses tRNA(Ala) + L-alanine + ATP = L-alanyl-tRNA(Ala) + AMP + diphosphate. Functionally, catalyzes the attachment of alanine to tRNA(Ala) in a two-step reaction: alanine is first activated by ATP to form Ala-AMP and then transferred to the acceptor end of tRNA(Ala). Also edits incorrectly charged Ser-tRNA(Ala) and Gly-tRNA(Ala) via its editing domain. The chain is Alanine--tRNA ligase from Aliarcobacter butzleri (strain RM4018) (Arcobacter butzleri).